The sequence spans 342 residues: Sesquiterpene synthase MBR_09977 (342 aa).

2 residues coordinate Mg(2+): Asp91 and Asp96. The DDXXXD motif signature appears at 91 to 96; the sequence is DDLFVD. Arg184 is a binding site for substrate. Mg(2+) contacts are provided by Asn230, Ser234, and Glu238.

The protein belongs to the terpene synthase family. Mg(2+) is required as a cofactor.

The enzyme catalyses (2E,6E)-farnesyl diphosphate + H2O = (+)-corvol ether B + diphosphate. The catalysed reaction is (2E,6E)-farnesyl diphosphate + H2O = (+)-corvol ether A + diphosphate. Its function is as follows. Terpene synthase that catalyzes the conversion of (2E,6E)-farnesyl diphosphate (FPP) into sesquiterpenes which are important for fungi-environment interactions. Produces a mixture consisting of 8 sesquiterpenes including corvol ethers A and B, as well as traces of epizonarene, gamma-cadinene, delta-cadinene, alpha-cadinene, alpha-cadinol, and an unidentified sesquiterpene. The major product is corvol ether A. This chain is Sesquiterpene synthase MBR_09977, found in Metarhizium brunneum (strain ARSEF 3297).